A 477-amino-acid chain; its full sequence is Bifunctional protein HldE (477 aa).

Residues M1 to T318 are ribokinase. N195 to E198 serves as a coordination point for ATP. D264 is an active-site residue. The segment at M344–K477 is cytidylyltransferase.

This sequence in the N-terminal section; belongs to the carbohydrate kinase PfkB family. It in the C-terminal section; belongs to the cytidylyltransferase family. As to quaternary structure, homodimer.

The enzyme catalyses D-glycero-beta-D-manno-heptose 7-phosphate + ATP = D-glycero-beta-D-manno-heptose 1,7-bisphosphate + ADP + H(+). It catalyses the reaction D-glycero-beta-D-manno-heptose 1-phosphate + ATP + H(+) = ADP-D-glycero-beta-D-manno-heptose + diphosphate. It functions in the pathway nucleotide-sugar biosynthesis; ADP-L-glycero-beta-D-manno-heptose biosynthesis; ADP-L-glycero-beta-D-manno-heptose from D-glycero-beta-D-manno-heptose 7-phosphate: step 1/4. It participates in nucleotide-sugar biosynthesis; ADP-L-glycero-beta-D-manno-heptose biosynthesis; ADP-L-glycero-beta-D-manno-heptose from D-glycero-beta-D-manno-heptose 7-phosphate: step 3/4. Catalyzes the phosphorylation of D-glycero-D-manno-heptose 7-phosphate at the C-1 position to selectively form D-glycero-beta-D-manno-heptose-1,7-bisphosphate. Its function is as follows. Catalyzes the ADP transfer from ATP to D-glycero-beta-D-manno-heptose 1-phosphate, yielding ADP-D-glycero-beta-D-manno-heptose. The protein is Bifunctional protein HldE of Citrobacter koseri (strain ATCC BAA-895 / CDC 4225-83 / SGSC4696).